A 173-amino-acid chain; its full sequence is Lipoprotein signal peptidase (173 aa).

The next 4 helical transmembrane spans lie at 7 to 27 (FFWFTALLSLLLDHLTKLWVV), 41 to 61 (LWPGVFHLTYVTNTGAAFSLF), 70 to 90 (WLSLGVSVGLMALAILGPNFN), and 95 to 115 (AGYGFLLGGAAGNGIDRFVAG). Active-site residues include D119 and D135. The helical transmembrane segment at 130–150 (IFNLADVFINIGIICLLIAAW) threads the bilayer.

This sequence belongs to the peptidase A8 family.

Its subcellular location is the cell inner membrane. The enzyme catalyses Release of signal peptides from bacterial membrane prolipoproteins. Hydrolyzes -Xaa-Yaa-Zaa-|-(S,diacylglyceryl)Cys-, in which Xaa is hydrophobic (preferably Leu), and Yaa (Ala or Ser) and Zaa (Gly or Ala) have small, neutral side chains.. The protein operates within protein modification; lipoprotein biosynthesis (signal peptide cleavage). Functionally, this protein specifically catalyzes the removal of signal peptides from prolipoproteins. This chain is Lipoprotein signal peptidase, found in Cyanothece sp. (strain PCC 7425 / ATCC 29141).